Consider the following 264-residue polypeptide: MSKVTTSTLMKFKQEGKKFTALTAYDASFAAAFDSEGVDVLLVGDSLGMVLQGHEDTLPVTVQDIAYHTRCVRRGISRALLIADLPFMSYATVEQTMTTATALMQAGANMVKLEGGEWLLESVKKLTERGVPVCAHIGLTPQSVHVFGGFKVQGRDADNAQRILNEAKALEAAGAQLLVIECIPASLAKAITEALSIPVIGIGAGKDTDGQILVMHDVLGISSGYIPRFSKNYLKQTGEIRAAVRAFIDEVADGSFPGPEHTFN.

Residues Asp45 and Asp84 each contribute to the Mg(2+) site. 3-methyl-2-oxobutanoate is bound by residues 45 to 46, Asp84, and Lys112; that span reads DS. Glu114 contacts Mg(2+). The active-site Proton acceptor is the Glu181.

This sequence belongs to the PanB family. Homodecamer; pentamer of dimers. The cofactor is Mg(2+).

The protein localises to the cytoplasm. The catalysed reaction is 3-methyl-2-oxobutanoate + (6R)-5,10-methylene-5,6,7,8-tetrahydrofolate + H2O = 2-dehydropantoate + (6S)-5,6,7,8-tetrahydrofolate. It functions in the pathway cofactor biosynthesis; (R)-pantothenate biosynthesis; (R)-pantoate from 3-methyl-2-oxobutanoate: step 1/2. In terms of biological role, catalyzes the reversible reaction in which hydroxymethyl group from 5,10-methylenetetrahydrofolate is transferred onto alpha-ketoisovalerate to form ketopantoate. The protein is 3-methyl-2-oxobutanoate hydroxymethyltransferase of Shewanella amazonensis (strain ATCC BAA-1098 / SB2B).